The sequence spans 314 residues: Caspase-like protein (314 aa).

This sequence belongs to the peptidase C14A family.

Functionally, may be involved in viral replication. This Heliothis virescens ascovirus 3e (HvAV-3e) protein is Caspase-like protein.